The chain runs to 368 residues: Histidinol-phosphate aminotransferase (368 aa).

An N6-(pyridoxal phosphate)lysine modification is found at Lys-223.

It belongs to the class-II pyridoxal-phosphate-dependent aminotransferase family. Histidinol-phosphate aminotransferase subfamily. In terms of assembly, homodimer. Pyridoxal 5'-phosphate is required as a cofactor.

It carries out the reaction L-histidinol phosphate + 2-oxoglutarate = 3-(imidazol-4-yl)-2-oxopropyl phosphate + L-glutamate. The protein operates within amino-acid biosynthesis; L-histidine biosynthesis; L-histidine from 5-phospho-alpha-D-ribose 1-diphosphate: step 7/9. The polypeptide is Histidinol-phosphate aminotransferase (hisC) (Sinorhizobium fredii (strain NBRC 101917 / NGR234)).